Here is a 524-residue protein sequence, read N- to C-terminus: Cytochrome P450 monooxygenase lnaC (524 aa).

Residues 16–36 form a helical membrane-spanning segment; sequence ALAVSCIAVSLFLLSPWIAYA. N-linked (GlcNAc...) asparagine glycosylation is present at Asn150. Cys471 is a heme binding site.

It belongs to the cytochrome P450 family. Heme serves as cofactor.

The protein resides in the membrane. Its pathway is secondary metabolite biosynthesis. Its function is as follows. Cytochrome P450 monooxygenase; part of the lna gene cluster that mediates the biosynthesis of diastereomeric piperazines. Lna and lnb clusters encode sets of enzymes that produce overlapping sets of previously undescribed metabolites such as piperazinomycin-like metabolites or morpholine. The lna and lnb biosynthetic pathways appear to be part of a signaling network that controls the formation of sclerotia, a resilient overwintering structure. One primary function of the non-canonical nonribosomal peptide synthetases lnaA and lnbA consists in the reduction of L-tyrosine. The presence in the clusters of tailoring enzymes such as the oxidoreductases lnaB, lnbB, lnaE or lnbE, as well as of the cytochrome P450 monooxygenases lnaC, lnaD, or lnbC, might explain formation of various diastereomeric piperazines. This Aspergillus flavus (strain ATCC 200026 / FGSC A1120 / IAM 13836 / NRRL 3357 / JCM 12722 / SRRC 167) protein is Cytochrome P450 monooxygenase lnaC.